The sequence spans 267 residues: Trehalose-phosphate phosphatase (267 aa).

Aspartate 20 functions as the Nucleophile in the catalytic mechanism. 3 residues coordinate Mg(2+): aspartate 20, aspartate 22, and aspartate 198. 20 to 22 (DLD) is a binding site for substrate.

This sequence belongs to the trehalose phosphatase family. It depends on Mg(2+) as a cofactor.

The enzyme catalyses alpha,alpha-trehalose 6-phosphate + H2O = alpha,alpha-trehalose + phosphate. It participates in glycan biosynthesis; trehalose biosynthesis. Its function is as follows. Removes the phosphate from trehalose 6-phosphate to produce free trehalose. This chain is Trehalose-phosphate phosphatase (otsB), found in Salmonella typhimurium (strain LT2 / SGSC1412 / ATCC 700720).